Here is a 539-residue protein sequence, read N- to C-terminus: Efflux pump roqT (539 aa).

The interval 1–25 is disordered; the sequence is MEKEVATDPLPQEIPSDAPDEGGSL. Transmembrane regions (helical) follow at residues 36-56, 108-128, 133-153, 160-180, 191-211, 233-253, 262-282, 305-325, 338-360, 362-384, 395-415, and 502-522; these read VSLT…VTII, LFLF…VGLI, IAGL…AQTV, VFTA…PPLG, WCFY…LFFF, IGSF…QWGG, RIIV…AVQI, WFAI…PIWF, VMNL…LVTI, GYYN…LLST, IGYQ…PFMV, and AFYV…ALEW.

Belongs to the major facilitator superfamily. TCR/Tet family.

It is found in the membrane. Efflux pump; part of the gene cluster that mediates the biosynthesis of the mycotoxins roquefortine C and meleagrin. The protein is Efflux pump roqT of Penicillium rubens (strain ATCC 28089 / DSM 1075 / NRRL 1951 / Wisconsin 54-1255) (Penicillium chrysogenum).